The chain runs to 109 residues: Class I hydrophobin 2 (109 aa).

The signal sequence occupies residues 1–18; it reads MQFKLAFVSIALATLAVA. 4 cysteine pairs are disulfide-bonded: Cys-30–Cys-90, Cys-37–Cys-84, Cys-38–Cys-71, and Cys-91–Cys-104.

This sequence belongs to the fungal hydrophobin family. In terms of assembly, self-assembles to form functional amyloid fibrils called rodlets. Self-assembly into fibrillar rodlets occurs spontaneously at hydrophobic:hydrophilic interfaces and the rodlets further associate laterally to form amphipathic monolayers.

The protein resides in the secreted. The protein localises to the cell wall. In terms of biological role, aerial growth, conidiation, and dispersal of filamentous fungi in the environment rely upon a capability of their secreting small amphipathic proteins called hydrophobins (HPBs) with low sequence identity. Class I can self-assemble into an outermost layer of rodlet bundles on aerial cell surfaces, conferring cellular hydrophobicity that supports fungal growth, development and dispersal; whereas Class II form highly ordered films at water-air interfaces through intermolecular interactions but contribute nothing to the rodlet structure. Hyd2 is a class I hydrophobin that may allow the dikaryotic mycelia to attach to the hydrophobic surface of the substrate. Higher expression in dikaryotic mycelia than in monokaryotic mycelia indicates that dikaryons require more hyd2 hydrophobin than the monokaryons, presumably for a higher rate of hyphal growth. The chain is Class I hydrophobin 2 from Lentinula edodes (Shiitake mushroom).